Here is a 660-residue protein sequence, read N- to C-terminus: tRNA 5-methylaminomethyl-2-thiouridine biosynthesis bifunctional protein MnmC (660 aa).

A tRNA (mnm(5)s(2)U34)-methyltransferase region spans residues 1–242 (MTDRIVPATL…KRAMLVGEFA (242 aa)). Residues 266-660 (IGAGLAGCAV…VRALRHGRVA (395 aa)) are FAD-dependent cmnm(5)s(2)U34 oxidoreductase.

The protein in the N-terminal section; belongs to the methyltransferase superfamily. tRNA (mnm(5)s(2)U34)-methyltransferase family. This sequence in the C-terminal section; belongs to the DAO family. Requires FAD as cofactor.

The protein localises to the cytoplasm. It catalyses the reaction 5-aminomethyl-2-thiouridine(34) in tRNA + S-adenosyl-L-methionine = 5-methylaminomethyl-2-thiouridine(34) in tRNA + S-adenosyl-L-homocysteine + H(+). Functionally, catalyzes the last two steps in the biosynthesis of 5-methylaminomethyl-2-thiouridine (mnm(5)s(2)U) at the wobble position (U34) in tRNA. Catalyzes the FAD-dependent demodification of cmnm(5)s(2)U34 to nm(5)s(2)U34, followed by the transfer of a methyl group from S-adenosyl-L-methionine to nm(5)s(2)U34, to form mnm(5)s(2)U34. The sequence is that of tRNA 5-methylaminomethyl-2-thiouridine biosynthesis bifunctional protein MnmC from Burkholderia pseudomallei (strain 1106a).